The primary structure comprises 275 residues: NAC domain-containing protein 2 (275 aa).

The region spanning 10–162 (LPPGFRFHPT…DWVLCRIYKK (153 aa)) is the NAC domain. Residues 107–168 (VGIKKALVFY…IYKKKNLERA (62 aa)) mediate DNA binding.

Expressed in roots, stem, flowers, and leaves.

It localises to the nucleus. Its function is as follows. Transcription factor that binds DNA motifs 5'-CGT[AG](5N)NACG[ACT][AC][AT][ACG][ACT]-3' and 5'-CACG[ACT][AC][AT][AGT][CT]-3' in target genes promoters. Promotes leaf senescence (developmental, light-induced and ABA-induced senescence) and regulates fruit yield and sugar content, probably by establishing abscisic acid (ABA) homeostasis. Activates the expression of senescence and ABA associated genes including NCED1, ABCG40, CYP707A2, SAG113, SGR1 and PAO, by directly binding to their promoters. This chain is NAC domain-containing protein 2, found in Solanum lycopersicum (Tomato).